The sequence spans 167 residues: MAPVTLSTVDDDLKEVIQHLFEIQSAVHGYLGPETQQELVRKIKNLTLALSTLSTHTKPHPPPPPPPQPTDPTTAAAPALRDNPDPPLSSIQLPPEIIDYVDAARNPDIYTREFVELVQRGNQDLKGKKEAFASFRDVLAREMRSAMPECRGEVERVLEGTGGKRER.

Residues Ser-54–Gln-92 form a disordered region. Over residues His-60–Thr-70 the composition is skewed to pro residues.

It belongs to the Mediator complex subunit 10 family. In terms of assembly, component of the Mediator complex.

It localises to the nucleus. Component of the Mediator complex, a coactivator involved in the regulated transcription of nearly all RNA polymerase II-dependent genes. Mediator functions as a bridge to convey information from gene-specific regulatory proteins to the basal RNA polymerase II transcription machinery. Mediator is recruited to promoters by direct interactions with regulatory proteins and serves as a scaffold for the assembly of a functional preinitiation complex with RNA polymerase II and the general transcription factors. The sequence is that of Mediator of RNA polymerase II transcription subunit 10 (nut2) from Aspergillus clavatus (strain ATCC 1007 / CBS 513.65 / DSM 816 / NCTC 3887 / NRRL 1 / QM 1276 / 107).